The following is a 448-amino-acid chain: ATP-dependent protease ATPase subunit HslU (448 aa).

ATP-binding positions include isoleucine 23, 65–70, aspartate 263, glutamate 327, and arginine 399; that span reads GIGKTE.

This sequence belongs to the ClpX chaperone family. HslU subfamily. As to quaternary structure, a double ring-shaped homohexamer of HslV is capped on each side by a ring-shaped HslU homohexamer. The assembly of the HslU/HslV complex is dependent on binding of ATP.

Its subcellular location is the cytoplasm. Its function is as follows. ATPase subunit of a proteasome-like degradation complex; this subunit has chaperone activity. The binding of ATP and its subsequent hydrolysis by HslU are essential for unfolding of protein substrates subsequently hydrolyzed by HslV. HslU recognizes the N-terminal part of its protein substrates and unfolds these before they are guided to HslV for hydrolysis. This Borreliella burgdorferi (strain ATCC 35210 / DSM 4680 / CIP 102532 / B31) (Borrelia burgdorferi) protein is ATP-dependent protease ATPase subunit HslU.